Consider the following 439-residue polypeptide: ATP-dependent RNA helicase RhlB (439 aa).

The Q motif motif lies at 9–37 (QKFADLPLHPEVKQALAENGFEFCTPIQA). In terms of domain architecture, Helicase ATP-binding spans 40-219 (LPVLLQSKDI…YDHMNDPVKV (180 aa)). 53 to 60 (AQTGTGKT) provides a ligand contact to ATP. Residues 165–168 (DEAD) carry the DEAD box motif. A Helicase C-terminal domain is found at 243-390 (KMRLLLTLIE…VSNYDSSALL (148 aa)). Positions 398–439 (KIPRKHPAGTRNLRERAGAGRPQGAHRSGGRPPRHDRTRRHS) are disordered. Basic residues predominate over residues 425–439 (SGGRPPRHDRTRRHS).

Belongs to the DEAD box helicase family. RhlB subfamily. As to quaternary structure, component of the RNA degradosome, which is a multiprotein complex involved in RNA processing and mRNA degradation.

It is found in the cytoplasm. The catalysed reaction is ATP + H2O = ADP + phosphate + H(+). DEAD-box RNA helicase involved in RNA degradation. Has RNA-dependent ATPase activity and unwinds double-stranded RNA. This Shewanella putrefaciens (strain CN-32 / ATCC BAA-453) protein is ATP-dependent RNA helicase RhlB.